Here is a 415-residue protein sequence, read N- to C-terminus: ER-derived vesicles protein ERV46 (415 aa).

The Cytoplasmic segment spans residues 1–24; the sequence is MKRSTLLSLDAFAKTEEDVRVRTR. A helical transmembrane segment spans residues 25–45; the sequence is AGGLITLSCILTTLFLLVNEW. Over 46 to 376 the chain is Lumenal; the sequence is GQFNSVVTRP…VINKEQHGQT (331 aa). A helical membrane pass occupies residues 377 to 397; the sequence is WSGFILNCITSIGGVLAVGTV. Residues 398 to 415 lie on the Cytoplasmic side of the membrane; it reads MDKLFYKAQRSIWGKKSQ. The short motif at 402 to 403 is the Phenylalanine-tyrosine motif element; it reads FY.

Belongs to the ERGIC family. Interacts with ERV41.

The protein resides in the endoplasmic reticulum membrane. It localises to the golgi apparatus membrane. In terms of biological role, constituent of COPII-coated endoplasmic reticulum-derived transport vesicles. Required for efficient transport of a subset of secretory proteins to the Golgi. The C-terminal Phe-Tyr motif is required for exit from the endoplasmic reticulum. Facilitates retrograde transport from the Golgi to the endoplasmic reticulum. The sequence is that of ER-derived vesicles protein ERV46 (ERV46) from Saccharomyces cerevisiae (strain ATCC 204508 / S288c) (Baker's yeast).